The sequence spans 90 residues: Small ribosomal subunit protein bS16 (90 aa).

This sequence belongs to the bacterial ribosomal protein bS16 family.

In Streptococcus thermophilus (strain CNRZ 1066), this protein is Small ribosomal subunit protein bS16.